A 408-amino-acid chain; its full sequence is MSFFNPPANSNHGYNDDVNTGYNARMHSKLAEREGFHLGNGSDEPRTLYVGNLDSTVTEDFIATLFNQIGSVTKTKVIFDGSNDPYAFVEFSDHGQASQALQTMNKRLLLDREMKVNWAVEPGQQQSKIDTTRHFHVFVGDLSSEVDNQKLREAFQPFGDVSDAKVIRDTNTTKSKGYGFVSYPKREEAERAIEQMNGQWLGRRTIRTNWATRKPGDQEKPSHYNEKSYDEIYNQTSGDNTSVYVGNIASLTEDEIRQGFASFGRITEVRIFKMQGYAFVKFDNKDAAAKAIVQMNNQDVGGQLVRCSWGKTGDTGKTPGGSYGYGYGNSSSGGNSQPYSGYGGGGAYGGGQGGGGHGGPGQQQSNANSQYWQYYAQYYNNPQLMQQWSNYWQQQGGAPQQQNSGGHQ.

3 consecutive RRM domains span residues 46–121, 135–213, and 241–312; these read RTLY…WAVE, FHVF…WATR, and TSVY…WGKT.

Expressed in the germline and also in somatic tissues. Expressed in Ggonads and oocytes. Expression is slightly reduced in the most proximal oocytes, especially the -1 oocyte. Aggregates mostly in the head neurons, muscles, intestine, vulval and hypodermal cells during heat shock. Expressed only in the intestine as a response to heat shock, starvation and dietary restriction.

The protein localises to the cytoplasm. The protein resides in the nucleus. Its subcellular location is the stress granule. In terms of biological role, acts downstream of ced-9 in the induction of germline apoptosis under different stress conditions including starvation, osmotic, oxidative, heat shock and UV stress. Plays a role in the formation of stress granules in response to heat shock and oxidative stress but not in response to osmotic stress. Required for the formation of stress granules in the core gonad but may not play a critical role in this process in the oocytes. Plays an important role in the formation of stress granules in the embryo. Protects female germ cells and embryos from heat shock. This Caenorhabditis elegans protein is Cytotoxic granule-associated RNA binding protein tiar-1.